Consider the following 179-residue polypeptide: Orotate phosphoribosyltransferase (179 aa).

Residues Arg94, Lys95, Lys98, His100, and 120–128 (EDTSTTGNS) each bind 5-phospho-alpha-D-ribose 1-diphosphate. Residues Thr124 and Arg152 each coordinate orotate.

This sequence belongs to the purine/pyrimidine phosphoribosyltransferase family. PyrE subfamily. Homodimer. Mg(2+) is required as a cofactor.

The catalysed reaction is orotidine 5'-phosphate + diphosphate = orotate + 5-phospho-alpha-D-ribose 1-diphosphate. It participates in pyrimidine metabolism; UMP biosynthesis via de novo pathway; UMP from orotate: step 1/2. Catalyzes the transfer of a ribosyl phosphate group from 5-phosphoribose 1-diphosphate to orotate, leading to the formation of orotidine monophosphate (OMP). The sequence is that of Orotate phosphoribosyltransferase from Mycobacterium avium (strain 104).